The sequence spans 73 residues: Conotoxin reg3a (73 aa).

Positions 1 to 20 (MMSKLRVLLTICLLLFPLSA) are cleaved as a signal peptide. The propeptide occupies 21–55 (LPLDGDQPADQPAKRMWNGKLAARKPRFDKYDLVR). 4-hydroxyproline is present on residues Pro-59, Pro-60, Pro-65, and Pro-70. Cysteine amide is present on Cys-72.

Post-translationally, contains 3 disulfide bonds. As to expression, expressed by the venom duct.

The protein localises to the secreted. This chain is Conotoxin reg3a, found in Conus regius (Crown cone).